The following is a 219-amino-acid chain: Protein ERP1 (219 aa).

The signal sequence occupies residues 1 to 22 (MLLTSLLQVFACCLVLPAQVTA). Residues 23 to 186 (FYYYTSGAER…RDASEAVNSR (164 aa)) are Lumenal-facing. The GOLD domain maps to 32-131 (RKCFHKELSK…KTKIDVEFQV (100 aa)). The helical transmembrane segment at 187 to 207 (AMWWIVIQLIVLAVTCGWQMK) threads the bilayer. The Cytoplasmic portion of the chain corresponds to 208–219 (HLGKFFVKQKIL).

The protein belongs to the EMP24/GP25L family. Associates with EMP24, ERV25 and ERP2.

It localises to the endoplasmic reticulum membrane. Involved in vesicular protein trafficking. The protein is Protein ERP1 (ERP1) of Saccharomyces cerevisiae (strain ATCC 204508 / S288c) (Baker's yeast).